A 450-amino-acid polypeptide reads, in one-letter code: Phosphoglucosamine mutase (450 aa).

Residue S104 is the Phosphoserine intermediate of the active site. S104, D245, D247, and D249 together coordinate Mg(2+). S104 is subject to Phosphoserine.

This sequence belongs to the phosphohexose mutase family. The cofactor is Mg(2+). Post-translationally, activated by phosphorylation.

It carries out the reaction alpha-D-glucosamine 1-phosphate = D-glucosamine 6-phosphate. Its function is as follows. Catalyzes the conversion of glucosamine-6-phosphate to glucosamine-1-phosphate. This chain is Phosphoglucosamine mutase, found in Phenylobacterium zucineum (strain HLK1).